Consider the following 497-residue polypeptide: PHD finger protein 10 (497 aa).

Positions 1 to 13 (MTAAGPGAAPSPG) are enriched in low complexity. Positions 1-61 (MTAAGPGAAP…SSRSCETSSQ (61 aa)) are disordered. A phosphoserine mark is found at Ser-11, Ser-35, and Ser-49. Positions 88–184 (MLQEQVSEYL…HYKEYSQMQQ (97 aa)) are essential to induce neural progenitor proliferation. The tract at residues 88–294 (MLQEQVSEYL…PPLDPELPAL (207 aa)) is SAY. Residue Lys-240 forms a Glycyl lysine isopeptide (Lys-Gly) (interchain with G-Cter in SUMO2) linkage. The residue at position 269 (Ser-269) is a Phosphoserine. The segment covering 284–295 (EPPLDPELPALD) has biased composition (low complexity). The segment at 284-368 (EPPLDPELPA…RSVLSKSAPG (85 aa)) is disordered. The essential to induce neural progenitor proliferation stretch occupies residues 291–333 (LPALDSDGDSDDGEDGGGDEKRKNKGTSDSSSGNVSEGDSPPD). Residues Ser-296, Ser-300, Ser-326, and Ser-330 each carry the phosphoserine modification. The segment covering 296–307 (SDGDSDDGEDGG) has biased composition (acidic residues). Over residues 317–327 (TSDSSSGNVSE) the composition is skewed to polar residues. Positions 337-358 (DTFHGRQKSKDKMATPRKDGSK) are enriched in basic and acidic residues. The PHD-type 1; degenerate zinc finger occupies 378–435 (LCGICLKGKESNKKGKAESLIHCSQCDNSGHPSCLDMTMELVSMIKTYPWQCMECKTC). Residue Lys-384 forms a Glycyl lysine isopeptide (Lys-Gly) (interchain with G-Cter in SUMO2) linkage. A PHD-type 2; degenerate zinc finger spans residues 437 to 480 (ICGQPHHEEEMMFCDVCDRGYHTFCVGLGAIPSGRWICDCCQRA).

The protein belongs to the SAYP family. As to quaternary structure, component of neural progenitors-specific chromatin remodeling complex (npBAF complex) composed of at least, ARID1A/BAF250A or ARID1B/BAF250B, SMARCD1/BAF60A, SMARCD3/BAF60C, SMARCA2/BRM/BAF190B, SMARCA4/BRG1/BAF190A, SMARCB1/BAF47, SMARCC1/BAF155, SMARCE1/BAF57, SMARCC2/BAF170, PHF10/BAF45A, ACTL6A/BAF53A and actin. Interacts with ACTL6A/BAF53A, SMARCA2/BRM/BAF190B, SMARCA4/BRG1/BAF190A and PBRM1/BAF180. As to expression, widely expressed. Expressed selectively in neural stem and progenitor cells (at protein level).

The protein localises to the nucleus. In terms of biological role, involved in transcription activity regulation by chromatin remodeling. Belongs to the neural progenitors-specific chromatin remodeling complex (npBAF complex) and is required for the proliferation of neural progenitors. During neural development a switch from a stem/progenitor to a post-mitotic chromatin remodeling mechanism occurs as neurons exit the cell cycle and become committed to their adult state. The transition from proliferating neural stem/progenitor cells to post-mitotic neurons requires a switch in subunit composition of the npBAF and nBAF complexes. As neural progenitors exit mitosis and differentiate into neurons, npBAF complexes which contain ACTL6A/BAF53A and PHF10/BAF45A, are exchanged for homologous alternative ACTL6B/BAF53B and DPF1/BAF45B or DPF3/BAF45C subunits in neuron-specific complexes (nBAF). The npBAF complex is essential for the self-renewal/proliferative capacity of the multipotent neural stem cells. The nBAF complex along with CREST plays a role regulating the activity of genes essential for dendrite growth. In Mus musculus (Mouse), this protein is PHD finger protein 10 (Phf10).